Consider the following 335-residue polypeptide: Probable deoxyhypusine synthase (335 aa).

Lys308 acts as the Nucleophile in catalysis.

The protein belongs to the deoxyhypusine synthase family. NAD(+) is required as a cofactor.

It carries out the reaction [eIF5A protein]-L-lysine + spermidine = [eIF5A protein]-deoxyhypusine + propane-1,3-diamine. The protein operates within protein modification; eIF5A hypusination. In terms of biological role, catalyzes the NAD-dependent oxidative cleavage of spermidine and the subsequent transfer of the butylamine moiety of spermidine to the epsilon-amino group of a specific lysine residue of the eIF-5A precursor protein to form the intermediate deoxyhypusine residue. The chain is Probable deoxyhypusine synthase from Thermococcus onnurineus (strain NA1).